A 77-amino-acid chain; its full sequence is Large ribosomal subunit protein uL29 (77 aa).

The protein belongs to the universal ribosomal protein uL29 family.

This Mycolicibacterium gilvum (strain PYR-GCK) (Mycobacterium gilvum (strain PYR-GCK)) protein is Large ribosomal subunit protein uL29.